The following is a 48-amino-acid chain: uncharacterized protein (48 aa).

The chain crosses the membrane as a helical span at residues 6 to 26 (IILLMIVCLVVSVLVVVWIIL).

Its subcellular location is the host membrane. This is an uncharacterized protein from Spiroplasma melliferum (SpV4).